Consider the following 326-residue polypeptide: Metal-binding protein YtgA (326 aa).

Positions 1–21 (MSFFHTRKYKLILRGLLCLAG) are cleaved as a signal peptide. The Fe(2+) site is built by His-75, His-141, His-207, and Asp-299.

It belongs to the bacterial solute-binding protein 9 family. Monomer.

It is found in the periplasm. Part of the ATP-binding cassette (ABC) transport system YtgABCD involved in metal import. Binds Fe(2+), Mn(2+) and Ni(2+), with a preference for Fe(2+) and delivers them to the membrane permease for translocation into the cytoplasm. In Chlamydia trachomatis serovar D (strain ATCC VR-885 / DSM 19411 / UW-3/Cx), this protein is Metal-binding protein YtgA.